Consider the following 562-residue polypeptide: Acetolactate synthase isozyme 1 large subunit (562 aa).

Residue E60 coordinates thiamine diphosphate. FAD-binding positions include R162, 264 to 285 (HGVR…LGAR), and 307 to 326 (DIDR…IQAD). Residues 393–473 (QHQMWTAQAY…VKIILMNNEA (81 aa)) are thiamine pyrophosphate binding. Positions 444 and 471 each coordinate Mg(2+).

Belongs to the TPP enzyme family. As to quaternary structure, dimer of large and small chains. Mg(2+) is required as a cofactor. The cofactor is thiamine diphosphate.

The enzyme catalyses 2 pyruvate + H(+) = (2S)-2-acetolactate + CO2. The protein operates within amino-acid biosynthesis; L-isoleucine biosynthesis; L-isoleucine from 2-oxobutanoate: step 1/4. Its pathway is amino-acid biosynthesis; L-valine biosynthesis; L-valine from pyruvate: step 1/4. The polypeptide is Acetolactate synthase isozyme 1 large subunit (ilvB) (Escherichia coli (strain K12)).